The chain runs to 213 residues: Vacuolar ATPase assembly integral membrane protein vph2 (213 aa).

2 consecutive transmembrane segments (helical) span residues 113-133 (ISAIINILFTVVGTVTAVWYC) and 142-162 (KIALCAFSAILVLVADTFLYV).

Its subcellular location is the endoplasmic reticulum membrane. Its function is as follows. Required for vacuolar ATPase assembly. This is Vacuolar ATPase assembly integral membrane protein vph2 (vph2) from Schizosaccharomyces pombe (strain 972 / ATCC 24843) (Fission yeast).